Here is a 989-residue protein sequence, read N- to C-terminus: DNA-directed RNA polymerase subunit beta' (989 aa).

Mg(2+) contacts are provided by D383, D385, and D387.

This sequence belongs to the RNA polymerase beta' chain family. In terms of assembly, the RNAP catalytic core consists of 2 alpha, 1 beta, 1 beta' and 1 omega subunit. When a sigma factor is associated with the core the holoenzyme is formed, which can initiate transcription. Mg(2+) is required as a cofactor.

The catalysed reaction is RNA(n) + a ribonucleoside 5'-triphosphate = RNA(n+1) + diphosphate. In terms of biological role, DNA-dependent RNA polymerase catalyzes the transcription of DNA into RNA using the four ribonucleoside triphosphates as substrates. This Leuconostoc pseudomesenteroides protein is DNA-directed RNA polymerase subunit beta' (rpoC).